The following is a 299-amino-acid chain: Protein LacX, plasmid (299 aa).

The chain is Protein LacX, plasmid (lacX) from Lactococcus lactis subsp. lactis (Streptococcus lactis).